The sequence spans 602 residues: Type 2 DNA topoisomerase 6 subunit B (602 aa).

ATP is bound by residues Asn-40, Asp-71, 92 to 93 (SR), 102 to 109 (GQQGIGIS), and Lys-425.

It belongs to the TOP6B family. Homodimer. Heterotetramer of two Top6A and two Top6B chains.

It carries out the reaction ATP-dependent breakage, passage and rejoining of double-stranded DNA.. Functionally, relaxes both positive and negative superturns and exhibits a strong decatenase activity. The protein is Type 2 DNA topoisomerase 6 subunit B of Archaeoglobus fulgidus (strain ATCC 49558 / DSM 4304 / JCM 9628 / NBRC 100126 / VC-16).